The primary structure comprises 95 residues: Small ribosomal subunit protein bS16 (95 aa).

Belongs to the bacterial ribosomal protein bS16 family.

This is Small ribosomal subunit protein bS16 from Roseiflexus sp. (strain RS-1).